The primary structure comprises 410 residues: Dipeptidase 1 (410 aa).

The first 16 residues, 1–16 (MWTGWWLWPLVAVCTA), serve as a signal peptide directing secretion. Zn(2+) contacts are provided by H36 and D38. N57 and N62 each carry an N-linked (GlcNAc...) asparagine glycan. C87 and C170 are disulfide-bonded. E141 is a Zn(2+) binding site. H168 provides a ligand contact to substrate. The Zn(2+) site is built by H214 and H235. A disulfide bridge connects residues C242 and C274. A substrate-binding site is contributed by R246. N279 carries an N-linked (GlcNAc...) asparagine glycan. A substrate-binding site is contributed by D304. S384 is lipidated: GPI-anchor amidated serine. Positions 385–410 (GAPSLHLQPGTLLASLVTLLLSLCLL) are cleaved as a propeptide — removed in mature form.

Belongs to the metallo-dependent hydrolases superfamily. Peptidase M19 family. In terms of assembly, homodimer; disulfide-linked. It depends on Zn(2+) as a cofactor.

The protein resides in the apical cell membrane. It carries out the reaction an L-aminoacyl-L-amino acid + H2O = 2 an L-alpha-amino acid. It catalyses the reaction leukotriene D4 + H2O = leukotriene E4 + glycine. The catalysed reaction is L-cystine-bis-glycine + 2 H2O = L-cystine + 2 glycine. The enzyme catalyses a beta-lactam + H2O = a substituted beta-amino acid. It carries out the reaction glycyldehydrophenylalanine + H2O = 2,3-didehydrophenylalanine + glycine. Its activity is regulated as follows. Inhibited by L-penicillamine. Inhibited by cilastatin. In terms of biological role, hydrolyzes a wide range of dipeptides including the conversion of leukotriene D4 to leukotriene E4. Hydrolyzes cystinyl-bis-glycine (cys-bis-gly) formed during glutathione degradation. Also possesses beta lactamase activity and hydrolytically inactivates beta-lactam antibiotics. Its function is as follows. Independently of its dipeptidase activity, acts as an adhesion receptor for neutrophil recruitment from bloodstream into inflamed lungs and liver. This chain is Dipeptidase 1 (DPEP1), found in Bos taurus (Bovine).